Here is a 192-residue protein sequence, read N- to C-terminus: NOP protein chaperone 1 (192 aa).

Positions 1-26 are enriched in low complexity; that stretch reads MEVSGESHSGPSCSSSSRDGSGVSVS. The tract at residues 1-39 is disordered; it reads MEVSGESHSGPSCSSSSRDGSGVSVSKELLMAGSGGRGG. Phosphoserine is present on residues serine 34 and serine 66. Positions 118–192 are disordered; that stretch reads FEMNQSHSKE…SENKEKQENK (75 aa). Positions 129 to 152 are enriched in acidic residues; it reads DSSEENSQDSSEESSESEDEDDST. Over residues 164–177 the composition is skewed to basic and acidic residues; it reads KLPHSEDGKGKIEV. Serine 180 is subject to Phosphoserine.

In terms of assembly, interacts with NOP58, RUVBL1 and RUVBL2; the interactions are direct and NOPCHAP1 bridges the association of NOP58 with RUVBL1:RUVBL2 even in absence of snoRNAs. The interactions with RUVBL1 and RUVBL2 are disrupted upon ATP binding.

It localises to the nucleus. Client-loading PAQosome/R2TP complex cofactor that selects NOP58 to promote box C/D small nucleolar ribonucleoprotein (snoRNP) assembly. Acts as a bridge between NOP58 and the R2TP complex via RUVBL1:RUVBL2. The sequence is that of NOP protein chaperone 1 (NOPCHAP1) from Bos taurus (Bovine).